The primary structure comprises 230 residues: Urease accessory protein UreF (230 aa).

Belongs to the UreF family. In terms of assembly, ureD, UreF and UreG form a complex that acts as a GTP-hydrolysis-dependent molecular chaperone, activating the urease apoprotein by helping to assemble the nickel containing metallocenter of UreC. The UreE protein probably delivers the nickel.

It localises to the cytoplasm. Functionally, required for maturation of urease via the functional incorporation of the urease nickel metallocenter. The protein is Urease accessory protein UreF of Marinomonas sp. (strain MWYL1).